Consider the following 99-residue polypeptide: Nucleoid-associated protein SEQ_0368 (99 aa).

It belongs to the YbaB/EbfC family. In terms of assembly, homodimer.

The protein localises to the cytoplasm. The protein resides in the nucleoid. In terms of biological role, binds to DNA and alters its conformation. May be involved in regulation of gene expression, nucleoid organization and DNA protection. The protein is Nucleoid-associated protein SEQ_0368 of Streptococcus equi subsp. equi (strain 4047).